The chain runs to 75 residues: Alpha-elapitoxin-Bc2a (75 aa).

The first 2 residues, 1 to 2 (YT), serve as a signal peptide directing secretion. 5 disulfide bridges follow: C5–C24, C17–C45, C30–C34, C49–C60, and C61–C66.

The protein belongs to the three-finger toxin family. Long-chain subfamily. Type II alpha-neurotoxin sub-subfamily. In terms of assembly, monomer in solution, homodimer in crystal state. Expressed by the venom gland.

It is found in the secreted. Its function is as follows. Binds to muscular and neuronal nicotinic acetylcholine receptor (nAChR) and inhibits acetylcholine from binding to the receptor, thereby impairing neuromuscular and neuronal transmission. Reversibly blocks chick and mouse muscle nicotinic acetylcholine receptors. Blocks muscle type nAChR with an IC(50)=30 nM, when heterologously expressed in oocytes. Also binds with high affinity to alpha-7/CHRNA7 nAChRs. In addition, shows a weak inhibition of neuronal alpha-3-beta-2/CHRNA3-CHRNB2 nAChR (IC(50)=2.9 uM). Selectively binds to alpha-1-delta subunit interface of the mouse muscle nicotinic acetylcholine receptor, with a 10-fold higher affinity for the adult than for the fetal receptors. In vivo, when intraperitoneally injected into mice, causes flaccid paralysis and respiratory distress, followed by death within 2-4 hours. The polypeptide is Alpha-elapitoxin-Bc2a (Bungarus candidus (Malayan krait)).